Here is a 71-residue protein sequence, read N- to C-terminus: Conotoxin Pl071 (71 aa).

The N-terminal stretch at 1 to 20 (MSRLFMILLVICVITLGTDA) is a signal peptide. The propeptide occupies 21–31 (SQAEDSGTEKR). Residue Tyr-69 is modified to Tyrosine amide.

It belongs to the conotoxin NSf-1 superfamily. Expressed by the venom duct.

It localises to the secreted. Its function is as follows. Probable neurotoxin with unknown target. Possibly targets ion channels. The protein is Conotoxin Pl071 of Conus planorbis (Planorbis cone).